The sequence spans 105 residues: Large ribosomal subunit protein uL24 (105 aa).

The protein belongs to the universal ribosomal protein uL24 family. Part of the 50S ribosomal subunit.

Its function is as follows. One of two assembly initiator proteins, it binds directly to the 5'-end of the 23S rRNA, where it nucleates assembly of the 50S subunit. One of the proteins that surrounds the polypeptide exit tunnel on the outside of the subunit. In Hahella chejuensis (strain KCTC 2396), this protein is Large ribosomal subunit protein uL24.